Consider the following 319-residue polypeptide: Probable cell division protein WhiA (319 aa).

The segment at residues 278 to 311 (SLKELGQMLNPPVGKSGVNHRLRRLESLAEAFSR) is a DNA-binding region (H-T-H motif).

The protein belongs to the WhiA family.

Functionally, involved in cell division and chromosome segregation. This is Probable cell division protein WhiA from Heliobacterium modesticaldum (strain ATCC 51547 / Ice1).